Here is a 102-residue protein sequence, read N- to C-terminus: NADH-quinone oxidoreductase subunit K 1 (102 aa).

3 consecutive transmembrane segments (helical) span residues 5 to 25 (FEHV…CVLV), 30 to 50 (LIML…AFVG), and 65 to 85 (LVIM…VVYL).

Belongs to the complex I subunit 4L family. As to quaternary structure, NDH-1 is composed of 14 different subunits. Subunits NuoA, H, J, K, L, M, N constitute the membrane sector of the complex.

Its subcellular location is the cell inner membrane. The enzyme catalyses a quinone + NADH + 5 H(+)(in) = a quinol + NAD(+) + 4 H(+)(out). Functionally, NDH-1 shuttles electrons from NADH, via FMN and iron-sulfur (Fe-S) centers, to quinones in the respiratory chain. The immediate electron acceptor for the enzyme in this species is believed to be ubiquinone. Couples the redox reaction to proton translocation (for every two electrons transferred, four hydrogen ions are translocated across the cytoplasmic membrane), and thus conserves the redox energy in a proton gradient. The chain is NADH-quinone oxidoreductase subunit K 1 from Geobacter metallireducens (strain ATCC 53774 / DSM 7210 / GS-15).